The primary structure comprises 287 residues: Probable endonuclease 4 (287 aa).

Residues H69, H109, E146, D180, H183, H217, D230, H232, and E262 each coordinate Zn(2+).

It belongs to the AP endonuclease 2 family. Requires Zn(2+) as cofactor.

It carries out the reaction Endonucleolytic cleavage to 5'-phosphooligonucleotide end-products.. Its function is as follows. Endonuclease IV plays a role in DNA repair. It cleaves phosphodiester bonds at apurinic or apyrimidinic (AP) sites, generating a 3'-hydroxyl group and a 5'-terminal sugar phosphate. The polypeptide is Probable endonuclease 4 (Petrotoga mobilis (strain DSM 10674 / SJ95)).